Reading from the N-terminus, the 529-residue chain is Mannuronan C5-epimerase (529 aa).

A signal peptide spans 1-30 (MGACAMNPQALKGSAMLAAAMLLASGAAMA). PbH1 repeat units follow at residues 229 to 256 (GTETYISNTKMASFGYANSKSYGVSISQ), 291 to 313 (TTGFVIKGNTYKDNIVYGIDPHD), 315 to 338 (SHGLIIADNTVYGTKKKHGIIISR), 340 to 362 (VNDSFIFNNRSYDNKLSGLVLDR), 364 to 386 (SVNNFVADNEFYRNHTDGITLYE), and 387 to 409 (SGDNLLWGNKVIANRRHGIRVRN). Residue H312 is the Proton acceptor of the active site.

This sequence belongs to the D-mannuronate C5-epimerase family.

It localises to the periplasm. It catalyses the reaction [(1-&gt;4)-beta-D-mannuronosyl](n) = [alginate](n). It functions in the pathway glycan biosynthesis; alginate biosynthesis. In terms of biological role, catalyzes the epimerization of beta-D-mannuronate to alpha-L-guluronate during the synthesis of the linear polysaccharide alginate. In addition, is part of a periplasmic protein complex that protects alginate from degradation by AlgL by channeling the newly formed alginate polymer through a scaffold that transfers the alginate polymer through the periplasmic space to the outer membrane secretin AlgE. The chain is Mannuronan C5-epimerase from Pseudomonas fluorescens.